The following is an 86-amino-acid chain: U15-lycotoxin-Ls1g (86 aa).

The signal sequence occupies residues 1–20; that stretch reads MNSKIFAVLLLLGLLSCVLS. The 46-residue stretch at 21-66 folds into the WAP domain; sequence DQYCPKSSITACKKMNIRNDCCKDDDCTGGSWCCATPCGNFCKYPA. 5 disulfides stabilise this stretch: C24–C54, C32–C58, C41–C53, C42–C80, and C47–C62.

This sequence belongs to the venom protein 11 family. 01 (wap-1) subfamily. Post-translationally, contains 5 disulfide bonds. Expressed by the venom gland.

The protein localises to the secreted. Functionally, has antibacterial activity. This chain is U15-lycotoxin-Ls1g, found in Lycosa singoriensis (Wolf spider).